A 519-amino-acid polypeptide reads, in one-letter code: U3 small nucleolar RNA-associated protein 15 homolog (519 aa).

Ala-2 bears the N-acetylalanine mark. WD repeat units lie at residues 36–75 (KEFGAVSKVDFSPQPPYNYAVTASSRIHIYGRYSQEPIKT), 78–117 (RFKDTAYCATFRQDGRLLVAGSEDGGVQLFDISGRAPLRQ), 120–159 (GHTKAVHSVDFTADKYHVVSGADDYTVKLWDIPNSKEILT), 162–202 (EHSD…SVIS), 204–242 (EHGQPVESVLLFPSGGLLVSAGGRYVKVWDMLKGGQLLV), 246–285 (NHHKTVTCLCLSSSGQRLLSGSLDRKVKVYSTTSYKVVHS), and 287–326 (DYTASILSLALAHEDETIVVGMTNGILSVKHRKSEAKKDS). Lys-249 is covalently cross-linked (Glycyl lysine isopeptide (Lys-Gly) (interchain with G-Cter in SUMO2)).

In terms of assembly, part of the small subunit (SSU) processome, composed of more than 70 proteins and the RNA chaperone small nucleolar RNA (snoRNA) U3. May be a component of the proposed t-UTP subcomplex of the ribosomal small subunit (SSU) processome containing at least UTP4, WDR43, HEATR1, UTP15, WDR75. Interacts directly with UTP4 and WDR43.

It localises to the nucleus. Its subcellular location is the nucleolus. Ribosome biogenesis factor. Involved in nucleolar processing of pre-18S ribosomal RNA. Required for optimal pre-ribosomal RNA transcription by RNA polymerase I. Part of the small subunit (SSU) processome, first precursor of the small eukaryotic ribosomal subunit. During the assembly of the SSU processome in the nucleolus, many ribosome biogenesis factors, an RNA chaperone and ribosomal proteins associate with the nascent pre-rRNA and work in concert to generate RNA folding, modifications, rearrangements and cleavage as well as targeted degradation of pre-ribosomal RNA by the RNA exosome. This chain is U3 small nucleolar RNA-associated protein 15 homolog, found in Bos taurus (Bovine).